Here is a 197-residue protein sequence, read N- to C-terminus: MPPAGPRGTAPLAAVVLLVLGAPLALASEDCLWYLDRNGSWHPGFDCEFFTFCCGTCYQRYCCRDLTLLITERQQKHCLAFSPKTIAGIASAVILFVAVVATTICCFLCSCCYLYRRRQQLQSTFEGQEIPMTGIPMQPVYQYPPDPKAGPAPPQPGFMYPPSGPAPQYPLYPAGPPIYNPAAPPPYMPPQPSYPGA.

Positions 1–27 (MPPAGPRGTAPLAAVVLLVLGAPLALA) are cleaved as a signal peptide. Over 28-87 (SEDCLWYLDRNGSWHPGFDCEFFTFCCGTCYQRYCCRDLTLLITERQQKHCLAFSPKTIA) the chain is Extracellular. A helical transmembrane segment spans residues 88 to 108 (GIASAVILFVAVVATTICCFL). At 109-197 (CSCCYLYRRR…MPPQPSYPGA (89 aa)) the chain is on the cytoplasmic side.

It belongs to the shisa family.

Its subcellular location is the membrane. The polypeptide is Protein shisa-4 (Shisa4) (Mus musculus (Mouse)).